The chain runs to 392 residues: 2,3-bisphosphoglycerate-independent phosphoglycerate mutase (392 aa).

The protein belongs to the BPG-independent phosphoglycerate mutase family. A-PGAM subfamily.

It carries out the reaction (2R)-2-phosphoglycerate = (2R)-3-phosphoglycerate. It participates in carbohydrate degradation; glycolysis; pyruvate from D-glyceraldehyde 3-phosphate: step 3/5. Its function is as follows. Catalyzes the interconversion of 2-phosphoglycerate and 3-phosphoglycerate. The protein is 2,3-bisphosphoglycerate-independent phosphoglycerate mutase of Methanothrix thermoacetophila (strain DSM 6194 / JCM 14653 / NBRC 101360 / PT) (Methanosaeta thermophila).